A 395-amino-acid chain; its full sequence is tRNA-specific 2-thiouridylase MnmA (395 aa).

ATP contacts are provided by residues 6-13 and Leu-32; that span reads AMSGGVDS. The Nucleophile role is filled by Cys-101. Cys-101 and Cys-193 are joined by a disulfide. Gly-125 serves as a coordination point for ATP. The interval 143–145 is interaction with tRNA; sequence KDQ. Cys-193 acts as the Cysteine persulfide intermediate in catalysis.

Belongs to the MnmA/TRMU family.

It localises to the cytoplasm. The catalysed reaction is S-sulfanyl-L-cysteinyl-[protein] + uridine(34) in tRNA + AH2 + ATP = 2-thiouridine(34) in tRNA + L-cysteinyl-[protein] + A + AMP + diphosphate + H(+). In terms of biological role, catalyzes the 2-thiolation of uridine at the wobble position (U34) of tRNA, leading to the formation of s(2)U34. This Corynebacterium jeikeium (strain K411) protein is tRNA-specific 2-thiouridylase MnmA.